Here is a 256-residue protein sequence, read N- to C-terminus: 1-(5-phosphoribosyl)-5-[(5-phosphoribosylamino)methylideneamino] imidazole-4-carboxamide isomerase (256 aa).

Asp-8 serves as the catalytic Proton acceptor. Asp-129 functions as the Proton donor in the catalytic mechanism.

This sequence belongs to the HisA/HisF family.

The protein resides in the cytoplasm. The catalysed reaction is 1-(5-phospho-beta-D-ribosyl)-5-[(5-phospho-beta-D-ribosylamino)methylideneamino]imidazole-4-carboxamide = 5-[(5-phospho-1-deoxy-D-ribulos-1-ylimino)methylamino]-1-(5-phospho-beta-D-ribosyl)imidazole-4-carboxamide. It functions in the pathway amino-acid biosynthesis; L-histidine biosynthesis; L-histidine from 5-phospho-alpha-D-ribose 1-diphosphate: step 4/9. This chain is 1-(5-phosphoribosyl)-5-[(5-phosphoribosylamino)methylideneamino] imidazole-4-carboxamide isomerase, found in Synechococcus sp. (strain CC9311).